Consider the following 241-residue polypeptide: Tetrahydromethanopterin S-methyltransferase subunit A (241 aa).

Residues 1–220 (MANKREPAPG…AKWQAGYYNG (220 aa)) lie on the Cytoplasmic side of the membrane. His-85 contributes to the 5-hydroxybenzimidazolylcob(I)amide binding site. The chain crosses the membrane as a helical span at residues 221-241 (KIQGIATGLFLMLLIMGILMF).

This sequence belongs to the MtrA family. In terms of assembly, the complex is composed of 8 subunits; MtrA, MtrB, MtrC, MtrD, MtrE, MtrF, MtrG and MtrH. It depends on 5-hydroxybenzimidazolylcob(I)amide as a cofactor.

Its subcellular location is the cell membrane. The catalysed reaction is 5-methyl-5,6,7,8-tetrahydromethanopterin + coenzyme M + 2 Na(+)(in) = 5,6,7,8-tetrahydromethanopterin + methyl-coenzyme M + 2 Na(+)(out). It functions in the pathway one-carbon metabolism; methanogenesis from CO(2); methyl-coenzyme M from 5,10-methylene-5,6,7,8-tetrahydromethanopterin: step 2/2. Its function is as follows. Part of a complex that catalyzes the formation of methyl-coenzyme M and tetrahydromethanopterin from coenzyme M and methyl-tetrahydromethanopterin. This is an energy-conserving, sodium-ion translocating step. The protein is Tetrahydromethanopterin S-methyltransferase subunit A of Methanocaldococcus jannaschii (strain ATCC 43067 / DSM 2661 / JAL-1 / JCM 10045 / NBRC 100440) (Methanococcus jannaschii).